The following is a 946-amino-acid chain: Bifunctional glutamine synthetase adenylyltransferase/adenylyl-removing enzyme (946 aa).

An adenylyl removase region spans residues 1–440 (MKPLSSPLQQ…VFNELIGDDE (440 aa)). Residues 449-946 (SEQWRELWQD…ASWQKWLVEE (498 aa)) form an adenylyl transferase region.

This sequence belongs to the GlnE family. The cofactor is Mg(2+).

The enzyme catalyses [glutamine synthetase]-O(4)-(5'-adenylyl)-L-tyrosine + phosphate = [glutamine synthetase]-L-tyrosine + ADP. It catalyses the reaction [glutamine synthetase]-L-tyrosine + ATP = [glutamine synthetase]-O(4)-(5'-adenylyl)-L-tyrosine + diphosphate. Its function is as follows. Involved in the regulation of glutamine synthetase GlnA, a key enzyme in the process to assimilate ammonia. When cellular nitrogen levels are high, the C-terminal adenylyl transferase (AT) inactivates GlnA by covalent transfer of an adenylyl group from ATP to specific tyrosine residue of GlnA, thus reducing its activity. Conversely, when nitrogen levels are low, the N-terminal adenylyl removase (AR) activates GlnA by removing the adenylyl group by phosphorolysis, increasing its activity. The regulatory region of GlnE binds the signal transduction protein PII (GlnB) which indicates the nitrogen status of the cell. The sequence is that of Bifunctional glutamine synthetase adenylyltransferase/adenylyl-removing enzyme from Escherichia coli O7:K1 (strain IAI39 / ExPEC).